The chain runs to 132 residues: Small ribosomal subunit protein uS8 (132 aa).

It belongs to the universal ribosomal protein uS8 family. As to quaternary structure, part of the 30S ribosomal subunit. Contacts proteins S5 and S12.

Its function is as follows. One of the primary rRNA binding proteins, it binds directly to 16S rRNA central domain where it helps coordinate assembly of the platform of the 30S subunit. The chain is Small ribosomal subunit protein uS8 from Staphylococcus saprophyticus subsp. saprophyticus (strain ATCC 15305 / DSM 20229 / NCIMB 8711 / NCTC 7292 / S-41).